The following is a 272-amino-acid chain: Ribonuclease HII (272 aa).

The RNase H type-2 domain maps to 87-272 (KYVAGVDEVG…HRMSFLKNIL (186 aa)). Residues D93, E94, and D188 each coordinate a divalent metal cation.

This sequence belongs to the RNase HII family. It depends on Mn(2+) as a cofactor. Mg(2+) serves as cofactor.

The protein resides in the cytoplasm. It carries out the reaction Endonucleolytic cleavage to 5'-phosphomonoester.. Endonuclease that specifically degrades the RNA of RNA-DNA hybrids. This is Ribonuclease HII from Clostridium perfringens (strain SM101 / Type A).